A 248-amino-acid polypeptide reads, in one-letter code: Triosephosphate isomerase (248 aa).

9-11 (NWK) is a binding site for substrate. Catalysis depends on His-94, which acts as the Electrophile. Glu-166 (proton acceptor) is an active-site residue. Residues Gly-172, Ser-212, and 233-234 (GG) each bind substrate.

The protein belongs to the triosephosphate isomerase family. As to quaternary structure, homodimer.

Its subcellular location is the cytoplasm. It catalyses the reaction D-glyceraldehyde 3-phosphate = dihydroxyacetone phosphate. It participates in carbohydrate biosynthesis; gluconeogenesis. It functions in the pathway carbohydrate degradation; glycolysis; D-glyceraldehyde 3-phosphate from glycerone phosphate: step 1/1. In terms of biological role, involved in the gluconeogenesis. Catalyzes stereospecifically the conversion of dihydroxyacetone phosphate (DHAP) to D-glyceraldehyde-3-phosphate (G3P). The chain is Triosephosphate isomerase from Clostridium acetobutylicum (strain ATCC 824 / DSM 792 / JCM 1419 / IAM 19013 / LMG 5710 / NBRC 13948 / NRRL B-527 / VKM B-1787 / 2291 / W).